Reading from the N-terminus, the 109-residue chain is NAD(P)H-quinone oxidoreductase subunit M (109 aa).

The protein belongs to the complex I NdhM subunit family. NDH-1 can be composed of about 15 different subunits; different subcomplexes with different compositions have been identified which probably have different functions.

Its subcellular location is the cellular thylakoid membrane. The enzyme catalyses a plastoquinone + NADH + (n+1) H(+)(in) = a plastoquinol + NAD(+) + n H(+)(out). It carries out the reaction a plastoquinone + NADPH + (n+1) H(+)(in) = a plastoquinol + NADP(+) + n H(+)(out). In terms of biological role, NDH-1 shuttles electrons from an unknown electron donor, via FMN and iron-sulfur (Fe-S) centers, to quinones in the respiratory and/or the photosynthetic chain. The immediate electron acceptor for the enzyme in this species is believed to be plastoquinone. Couples the redox reaction to proton translocation, and thus conserves the redox energy in a proton gradient. Cyanobacterial NDH-1 also plays a role in inorganic carbon-concentration. This Microcystis aeruginosa (strain NIES-843 / IAM M-2473) protein is NAD(P)H-quinone oxidoreductase subunit M.